Consider the following 340-residue polypeptide: Glyceraldehyde-3-phosphate dehydrogenase, cytosolic (340 aa).

NAD(+) contacts are provided by residues 16 to 17 (RI), Asp38, and Arg85. D-glyceraldehyde 3-phosphate contacts are provided by residues 156 to 158 (SCT), Thr187, 216 to 217 (TG), and Arg239. Cys157 (nucleophile) is an active-site residue. Asn321 is a binding site for NAD(+).

The protein belongs to the glyceraldehyde-3-phosphate dehydrogenase family. In terms of assembly, homotetramer.

The protein resides in the cytoplasm. It carries out the reaction D-glyceraldehyde 3-phosphate + phosphate + NAD(+) = (2R)-3-phospho-glyceroyl phosphate + NADH + H(+). It participates in carbohydrate degradation; glycolysis; pyruvate from D-glyceraldehyde 3-phosphate: step 1/5. Functionally, key enzyme in glycolysis that catalyzes the first step of the pathway by converting D-glyceraldehyde 3-phosphate (G3P) into 3-phospho-D-glyceroyl phosphate. Essential for the maintenance of cellular ATP levels and carbohydrate metabolism. The polypeptide is Glyceraldehyde-3-phosphate dehydrogenase, cytosolic (Taxus baccata (English yew)).